Consider the following 226-residue polypeptide: Leucyl/phenylalanyl-tRNA--protein transferase (226 aa).

The protein belongs to the L/F-transferase family.

Its subcellular location is the cytoplasm. It catalyses the reaction N-terminal L-lysyl-[protein] + L-leucyl-tRNA(Leu) = N-terminal L-leucyl-L-lysyl-[protein] + tRNA(Leu) + H(+). The enzyme catalyses N-terminal L-arginyl-[protein] + L-leucyl-tRNA(Leu) = N-terminal L-leucyl-L-arginyl-[protein] + tRNA(Leu) + H(+). The catalysed reaction is L-phenylalanyl-tRNA(Phe) + an N-terminal L-alpha-aminoacyl-[protein] = an N-terminal L-phenylalanyl-L-alpha-aminoacyl-[protein] + tRNA(Phe). Its function is as follows. Functions in the N-end rule pathway of protein degradation where it conjugates Leu, Phe and, less efficiently, Met from aminoacyl-tRNAs to the N-termini of proteins containing an N-terminal arginine or lysine. This is Leucyl/phenylalanyl-tRNA--protein transferase from Pseudomonas putida (strain ATCC 47054 / DSM 6125 / CFBP 8728 / NCIMB 11950 / KT2440).